A 385-amino-acid polypeptide reads, in one-letter code: Transcription termination factor 2, mitochondrial (385 aa).

A mitochondrion-targeting transit peptide spans 1–35; that stretch reads MPWRLPTGHQLCRLCLLRKPRPALKIKPSSACVTY.

This sequence belongs to the mTERF family. Monomer.

It is found in the mitochondrion matrix. The protein resides in the mitochondrion nucleoid. Functionally, binds mitochondrial DNA and plays a role in the regulation of transcription of mitochondrial mRNA and rRNA species. The chain is Transcription termination factor 2, mitochondrial (Mterf2) from Mus musculus (Mouse).